The following is a 405-amino-acid chain: Glucose-1-phosphate adenylyltransferase 1 (405 aa).

Alpha-D-glucose 1-phosphate is bound by residues Y96, G161, 176 to 177, and S194; that span reads EK.

This sequence belongs to the bacterial/plant glucose-1-phosphate adenylyltransferase family. Homotetramer.

The catalysed reaction is alpha-D-glucose 1-phosphate + ATP + H(+) = ADP-alpha-D-glucose + diphosphate. It functions in the pathway glycan biosynthesis; glycogen biosynthesis. Involved in the biosynthesis of ADP-glucose, a building block required for the elongation reactions to produce glycogen. Catalyzes the reaction between ATP and alpha-D-glucose 1-phosphate (G1P) to produce pyrophosphate and ADP-Glc. This Vibrio cholerae serotype O1 (strain ATCC 39315 / El Tor Inaba N16961) protein is Glucose-1-phosphate adenylyltransferase 1.